Consider the following 145-residue polypeptide: Snaclec salmorin subunit B (145 aa).

The signal sequence occupies residues 1–23 (MGRFIFVSFGLLVVFVSLSGTGA). Disulfide bonds link C25/C36, C53/C141, and C118/C133. The 111-residue stretch at 32-142 (YEGHCYKLFN…CRMEAYFVCE (111 aa)) folds into the C-type lectin domain. S64 and E70 together coordinate Ca(2+). E142 provides a ligand contact to Ca(2+).

Belongs to the snaclec family. In terms of assembly, heterodimer of subunits A and B; disulfide-linked. Expressed by the venom gland.

It localises to the secreted. Functionally, inhibits thrombin-induced fibrinogen clotting and factor Xa-induced prothrombin activation. Binds to thrombin and prothrombin exosites. This chain is Snaclec salmorin subunit B, found in Gloydius brevicauda (Korean slamosa snake).